The primary structure comprises 276 residues: NADH-cytochrome b5 reductase 2 (276 aa).

One can recognise an FAD-binding FR-type domain in the interval 15 to 127; that stretch reads EAKYPLPLIE…RGPRGRLFYH (113 aa). K17 carries the post-translational modification N6-acetyllysine. At Y18 the chain carries Phosphotyrosine. FAD-binding positions include 107–137 and 146–181; these read ENMKIGETIFFRGPRGRLFYHGPGNLGIRPD and LADHLGMIAGGTGITPMLQLIRHITKDPSDRTRMSL.

Belongs to the flavoprotein pyridine nucleotide cytochrome reductase family. Requires FAD as cofactor. As to expression, restricted expression.

It carries out the reaction 2 Fe(III)-[cytochrome b5] + NADH = 2 Fe(II)-[cytochrome b5] + NAD(+) + H(+). NADH-cytochrome b5 reductases are involved in desaturation and elongation of fatty acids, cholesterol biosynthesis, drug metabolism, and, in erythrocyte, methemoglobin reduction. Responsible for NADH-dependent lucigenin chemiluminescence in spermatozoa by reducing both lucigenin and 2-[4-iodophenyl]-3-[4-nitrophenyl]-5-[2,4-disulfophenyl]-2H tetrazolium monosodium salt (WST-1). The chain is NADH-cytochrome b5 reductase 2 from Homo sapiens (Human).